The following is a 353-amino-acid chain: Replication factor C subunit 2 (353 aa).

Met1 is modified (N-acetylmethionine). ATP contacts are provided by residues Val28, Arg32, 65–73 (GPPGTGKTS), Asn171, and Arg229.

This sequence belongs to the activator 1 small subunits family. Replication factor C (RFC) is a heteropentamer of subunits RFC1, RFC2, RFC3, RFC4 and RFC5 and forms a complex with POL30/PCNA in the presence of ATP. Component of the RAD24-RFC complex which consists of RAD14, RFC2, RFC3, RFC4 and RFC5 and associates with the checkpoint clamp DDC1:MEC3:RAD17 complex. Component of the ELG1-RFC complex which consists of ELG1, RFC2, RFC3, RFC4 and RFC5. Component of the CTF18-RFC complex, which consists of CTF18, CTF8, DCC1, RFC2, RFC3, RFC4 and RFC5. RFC2 interacts with ECO1.

The protein localises to the nucleus. Its function is as follows. Component of ATP-dependent clamp loader (RFC and RFC-like) complexes for DNA clamps, such as the POL30/PCNA homotrimer and the checkpoint clamp DDC1:MEC3:RAD17 complex. During a clamp loading circle, the RFC:clamp complex binds to DNA and the recognition of the double-stranded/single-stranded junction stimulates ATP hydrolysis by RFC. The complex presumably provides bipartite ATP sites in which one subunit supplies a catalytic site for hydrolysis of ATP bound to the neighboring subunit. Dissociation of RFC from the clamp leaves the clamp encircling DNA. Component of the replication factor C (RFC or activator 1) complex which loads POL30/PCNA and acts during elongation of primed DNA templates by DNA polymerase delta and epsilon. RFC has an essential but redundant activity in sister chromatid cohesion establishment. Component of the RFC-like complex CTF18-RFC which is required for efficient establishment of chromosome cohesion during S-phase and may load or unload POL30/PCNA. Component of the RFC-like RAD24-RFC complex which loads the checkpoint clamp DDC1:MEC3:RAD17 complex and is involved in DNA repair pathways. Component of the RFC-like ELG1-RFC complex which appears to have a role in DNA replication, replication fork re-start, recombination and repair. RFC2 binds ATP and single-stranded DNA. The protein is Replication factor C subunit 2 (RFC2) of Saccharomyces cerevisiae (strain ATCC 204508 / S288c) (Baker's yeast).